The sequence spans 355 residues: Probable poly-beta-1,6-N-acetyl-D-glucosamine export protein (355 aa).

10 consecutive transmembrane segments (helical) span residues A13–L30, Y45–L67, I74–S96, V116–I138, L145–L167, M187–N204, F211–V233, S243–V262, M269–I291, and T306–L328.

Belongs to the acyltransferase 3 family.

The protein localises to the cell membrane. Its function is as follows. Presumably involved in the export of the biofilm adhesin polysaccharide poly-beta-1,6-N-acetyl-D-glucosamine (PNAG, also referred to as PIA) across the cell membrane. The sequence is that of Probable poly-beta-1,6-N-acetyl-D-glucosamine export protein (icaC) from Staphylococcus epidermidis.